A 371-amino-acid chain; its full sequence is Cytochrome b (371 aa).

Transmembrane regions (helical) follow at residues 25–45 (FGSM…FLAV), 69–90 (WMMQ…YIHI), 105–125 (WLSG…GYVL), and 170–190 (FSAL…LHIM). Positions 75 and 89 each coordinate heme b. 2 residues coordinate heme b: His174 and His188. His193 contributes to the a ubiquinone binding site. 4 helical membrane passes run 218 to 238 (YKDL…VSFL), 280 to 300 (LGGA…PFTH), 312 to 332 (IMQL…WSAT), and 339 to 358 (FTVI…IMNP).

This sequence belongs to the cytochrome b family. The cytochrome bc1 complex contains 3 respiratory subunits (MT-CYB, CYC1 and UQCRFS1), 2 core proteins (UQCRC1 and UQCRC2) and probably 6 low-molecular weight proteins. It depends on heme b as a cofactor.

Its subcellular location is the mitochondrion inner membrane. In terms of biological role, component of the ubiquinol-cytochrome c reductase complex (complex III or cytochrome b-c1 complex) that is part of the mitochondrial respiratory chain. The b-c1 complex mediates electron transfer from ubiquinol to cytochrome c. Contributes to the generation of a proton gradient across the mitochondrial membrane that is then used for ATP synthesis. This Eryx elegans (Central Asian sand boa) protein is Cytochrome b (MT-CYB).